The sequence spans 300 residues: ATP-dependent (S)-NAD(P)H-hydrate dehydratase (300 aa).

Positions 7-289 constitute a YjeF C-terminal domain; the sequence is IEARLKSIIP…ESIPSVFDQV (283 aa). Residues glycine 107 and 160–166 contribute to the (6S)-NADPHX site; that span reads NVMEYRR. ATP-binding positions include 194–198 and 213–222; these read KGQVD and GSPRRCGGQG. Aspartate 223 serves as a coordination point for (6S)-NADPHX.

It belongs to the NnrD/CARKD family. Mg(2+) serves as cofactor.

It carries out the reaction (6S)-NADHX + ATP = ADP + phosphate + NADH + H(+). The enzyme catalyses (6S)-NADPHX + ATP = ADP + phosphate + NADPH + H(+). In terms of biological role, catalyzes the dehydration of the S-form of NAD(P)HX at the expense of ATP, which is converted to ADP. Together with NAD(P)HX epimerase, which catalyzes the epimerization of the S- and R-forms, the enzyme allows the repair of both epimers of NAD(P)HX, a damaged form of NAD(P)H that is a result of enzymatic or heat-dependent hydration. The chain is ATP-dependent (S)-NAD(P)H-hydrate dehydratase from Entamoeba histolytica (strain ATCC 30459 / HM-1:IMSS / ABRM).